The following is a 54-amino-acid chain: Ovomucoid (54 aa).

The 51-residue stretch at 4-54 (VDCSEYPKPACTLEYRPLCGSDSKTYGNKCNFCNAVVESNGTLTLSHFGKC) folds into the Kazal-like domain. 3 cysteine pairs are disulfide-bonded: Cys6–Cys36, Cys14–Cys33, and Cys22–Cys54. N-linked (GlcNAc...) asparagine glycosylation is present at Asn43.

It is found in the secreted. In Alectoris chukar (Chukar partridge), this protein is Ovomucoid.